Here is a 354-residue protein sequence, read N- to C-terminus: 3-isopropylmalate dehydrogenase (354 aa).

73–86 (GPAYDKLDRPLRPE) serves as a coordination point for NAD(+). The substrate site is built by arginine 93, arginine 103, arginine 131, and aspartate 221. Aspartate 221, aspartate 245, and aspartate 249 together coordinate Mg(2+). 279–291 (GSAPDIAGQNLAN) provides a ligand contact to NAD(+).

It belongs to the isocitrate and isopropylmalate dehydrogenases family. LeuB type 1 subfamily. As to quaternary structure, homodimer. It depends on Mg(2+) as a cofactor. Mn(2+) is required as a cofactor.

The protein localises to the cytoplasm. It catalyses the reaction (2R,3S)-3-isopropylmalate + NAD(+) = 4-methyl-2-oxopentanoate + CO2 + NADH. It functions in the pathway amino-acid biosynthesis; L-leucine biosynthesis; L-leucine from 3-methyl-2-oxobutanoate: step 3/4. Catalyzes the oxidation of 3-carboxy-2-hydroxy-4-methylpentanoate (3-isopropylmalate) to 3-carboxy-4-methyl-2-oxopentanoate. The product decarboxylates to 4-methyl-2 oxopentanoate. This Chromobacterium violaceum (strain ATCC 12472 / DSM 30191 / JCM 1249 / CCUG 213 / NBRC 12614 / NCIMB 9131 / NCTC 9757 / MK) protein is 3-isopropylmalate dehydrogenase.